The primary structure comprises 344 residues: Ribosomal RNA small subunit methyltransferase H 2 (344 aa).

S-adenosyl-L-methionine is bound by residues 78–80 (GGH), Asp98, Phe131, Asp145, and Gln152.

The protein belongs to the methyltransferase superfamily. RsmH family.

The protein localises to the cytoplasm. It carries out the reaction cytidine(1402) in 16S rRNA + S-adenosyl-L-methionine = N(4)-methylcytidine(1402) in 16S rRNA + S-adenosyl-L-homocysteine + H(+). Functionally, specifically methylates the N4 position of cytidine in position 1402 (C1402) of 16S rRNA. This Acholeplasma laidlawii (strain PG-8A) protein is Ribosomal RNA small subunit methyltransferase H 2.